The primary structure comprises 358 residues: tRNA-specific 2-thiouridylase MnmA 2 (358 aa).

Residues 11-18 (GMSGGVDS) and M37 each bind ATP. C106 serves as the catalytic Nucleophile. C106 and C202 are joined by a disulfide. Residue G130 participates in ATP binding. The interaction with tRNA stretch occupies residues 152–154 (KDQ). C202 serves as the catalytic Cysteine persulfide intermediate. The segment at 308–309 (RY) is interaction with tRNA.

This sequence belongs to the MnmA/TRMU family.

Its subcellular location is the cytoplasm. The catalysed reaction is S-sulfanyl-L-cysteinyl-[protein] + uridine(34) in tRNA + AH2 + ATP = 2-thiouridine(34) in tRNA + L-cysteinyl-[protein] + A + AMP + diphosphate + H(+). Functionally, catalyzes the 2-thiolation of uridine at the wobble position (U34) of tRNA, leading to the formation of s(2)U34. The polypeptide is tRNA-specific 2-thiouridylase MnmA 2 (Clostridium tetani (strain Massachusetts / E88)).